We begin with the raw amino-acid sequence, 67 residues long: Prokaryotic ubiquitin-like protein Pup (67 aa).

The tract at residues 1–26 (MATKETGGQKHATRRNQEVEEIEVTT) is disordered. An ARC ATPase binding region spans residues 23–61 (EVTTETSVRNEKLAEDVDDILDEIDEVLESNAEDFVRQF). A coiled-coil region spans residues 27–55 (ETSVRNEKLAEDVDDILDEIDEVLESNAE). E67 participates in a covalent cross-link: Isoglutamyl lysine isopeptide (Glu-Lys) (interchain with K-? in acceptor proteins).

The protein belongs to the prokaryotic ubiquitin-like protein family. As to quaternary structure, strongly interacts with the proteasome-associated ATPase ARC through a hydrophobic interface; the interacting region of Pup lies in its C-terminal half. There is one Pup binding site per ARC hexamer ring.

The protein operates within protein degradation; proteasomal Pup-dependent pathway. In terms of biological role, protein modifier that is covalently attached to lysine residues of substrate proteins, thereby targeting them for proteasomal degradation. The tagging system is termed pupylation. In Thermobifida fusca (strain YX), this protein is Prokaryotic ubiquitin-like protein Pup.